A 327-amino-acid polypeptide reads, in one-letter code: Cysteine synthase (327 aa).

K65 carries the N6-(pyridoxal phosphate)lysine modification. Pyridoxal 5'-phosphate-binding positions include N95, 200–204 (GTGGT), and S282.

The protein belongs to the cysteine synthase/cystathionine beta-synthase family. Pyridoxal 5'-phosphate serves as cofactor.

The enzyme catalyses O-acetyl-L-serine + hydrogen sulfide = L-cysteine + acetate. It functions in the pathway amino-acid biosynthesis; L-cysteine biosynthesis; L-cysteine from L-serine: step 2/2. In Aquifex aeolicus (strain VF5), this protein is Cysteine synthase (cysM).